A 759-amino-acid chain; its full sequence is Phosphoribosylformylglycinamidine synthase subunit PurL (759 aa).

His46 is an active-site residue. Positions 49 and 88 each coordinate ATP. Glu90 contacts Mg(2+). Residues 91-94 (SHNH) and Arg113 contribute to the substrate site. The active-site Proton acceptor is the His92. Asp114 provides a ligand contact to Mg(2+). Gln237 serves as a coordination point for substrate. Asp265 is a Mg(2+) binding site. Substrate is bound at residue 309 to 311 (ESQ). Positions 498 and 535 each coordinate ATP. Asn536 serves as a coordination point for Mg(2+). Ser538 contacts substrate.

Belongs to the FGAMS family. As to quaternary structure, monomer. Part of the FGAM synthase complex composed of 1 PurL, 1 PurQ and 2 PurS subunits.

Its subcellular location is the cytoplasm. The catalysed reaction is N(2)-formyl-N(1)-(5-phospho-beta-D-ribosyl)glycinamide + L-glutamine + ATP + H2O = 2-formamido-N(1)-(5-O-phospho-beta-D-ribosyl)acetamidine + L-glutamate + ADP + phosphate + H(+). The protein operates within purine metabolism; IMP biosynthesis via de novo pathway; 5-amino-1-(5-phospho-D-ribosyl)imidazole from N(2)-formyl-N(1)-(5-phospho-D-ribosyl)glycinamide: step 1/2. Its function is as follows. Part of the phosphoribosylformylglycinamidine synthase complex involved in the purines biosynthetic pathway. Catalyzes the ATP-dependent conversion of formylglycinamide ribonucleotide (FGAR) and glutamine to yield formylglycinamidine ribonucleotide (FGAM) and glutamate. The FGAM synthase complex is composed of three subunits. PurQ produces an ammonia molecule by converting glutamine to glutamate. PurL transfers the ammonia molecule to FGAR to form FGAM in an ATP-dependent manner. PurS interacts with PurQ and PurL and is thought to assist in the transfer of the ammonia molecule from PurQ to PurL. This is Phosphoribosylformylglycinamidine synthase subunit PurL from Anaeromyxobacter dehalogenans (strain 2CP-C).